A 408-amino-acid polypeptide reads, in one-letter code: tRNA wybutosine-synthesizing protein 2 homolog (408 aa).

S-adenosyl-L-methionine is bound by residues S201, K208, E248, and 276–277 (DN).

Belongs to the class I-like SAM-binding methyltransferase superfamily. TRM5/TYW2 family.

It carries out the reaction 4-demethylwyosine(37) in tRNA(Phe) + S-adenosyl-L-methionine = 4-demethyl-7-[(3S)-3-amino-3-carboxypropyl]wyosine(37) in tRNA(Phe) + S-methyl-5'-thioadenosine + H(+). It participates in tRNA modification; wybutosine-tRNA(Phe) biosynthesis. S-adenosyl-L-methionine-dependent transferase that acts as a component of the wybutosine biosynthesis pathway. Wybutosine is a hyper modified guanosine with a tricyclic base found at the 3'-position adjacent to the anticodon of eukaryotic phenylalanine tRNA. Catalyzes the transfer of the alpha-amino-alpha-carboxypropyl (acp) group from S-adenosyl-L-methionine to the C-7 position of 4-demethylwyosine (imG-14) to produce wybutosine-86. The polypeptide is tRNA wybutosine-synthesizing protein 2 homolog (trmt12) (Danio rerio (Zebrafish)).